Here is a 111-residue protein sequence, read N- to C-terminus: MGSSSFLVLMVSLALVTLVAAEGVKGGIEKAGVCPADNIRCFKSDPPQCHTDQDCLGERKCCYLHCGFKCVIPVKKLEEGGNKDEDVSGPCPEPGWEAKSPGSSSTGCPQK.

The signal sequence occupies residues 1 to 23; sequence MGSSSFLVLMVSLALVTLVAAEG. The WAP domain occupies 27–74; the sequence is GIEKAGVCPADNIRCFKSDPPQCHTDQDCLGERKCCYLHCGFKCVIPV. 4 disulfide bridges follow: C34–C62, C41–C66, C49–C61, and C55–C70. The segment at 80-111 is disordered; sequence GGNKDEDVSGPCPEPGWEAKSPGSSSTGCPQK. The span at 101-111 shows a compositional bias: polar residues; it reads PGSSSTGCPQK.

The protein resides in the secreted. Its function is as follows. Antibacterial protein. Putative acid-stable proteinase inhibitor. In Macaca mulatta (Rhesus macaque), this protein is WAP four-disulfide core domain protein 12 (WFDC12).